We begin with the raw amino-acid sequence, 711 residues long: Exotoxin translocation ATP-binding protein PaxB (711 aa).

The 129-residue stretch at 1 to 129 folds into the Peptidase C39 domain; sequence MEPLMSFKQK…QVFQGNVILL (129 aa). Transmembrane regions (helical) follow at residues 157–177, 195–215, 273–293, 299–319, and 392–412; these read IFVE…ITPL, LNVI…LSGL, ALTS…MWYY, IVIL…SPIL, and VMII…LSIG. The ABC transmembrane type-1 domain maps to 158–440; sequence FVEVMIVSIF…LAQLWQDFQQ (283 aa). Positions 472-707 constitute an ABC transporter domain; sequence VTFKNIRFRY…KDGLYYYLNQ (236 aa). 506–513 lines the ATP pocket; it reads GRSGSGKS.

Belongs to the ABC transporter superfamily. Protein-1 exporter (TC 3.A.1.109) family. As to quaternary structure, homodimer.

The protein resides in the cell inner membrane. It carries out the reaction ATP + H2O + proteinSide 1 = ADP + phosphate + proteinSide 2.. Its function is as follows. Part of the ABC transporter complex PaxBD involved in PaxA export. Transmembrane domains (TMD) form a pore in the inner membrane and the ATP-binding domain (NBD) is responsible for energy generation. This chain is Exotoxin translocation ATP-binding protein PaxB (paxB), found in Pasteurella aerogenes.